A 503-amino-acid chain; its full sequence is Probable cytosol aminopeptidase (503 aa).

Residues K274 and D279 each contribute to the Mn(2+) site. The active site involves K286. D297, D356, and E358 together coordinate Mn(2+). Residue R360 is part of the active site.

Belongs to the peptidase M17 family. Mn(2+) serves as cofactor.

It is found in the cytoplasm. It carries out the reaction Release of an N-terminal amino acid, Xaa-|-Yaa-, in which Xaa is preferably Leu, but may be other amino acids including Pro although not Arg or Lys, and Yaa may be Pro. Amino acid amides and methyl esters are also readily hydrolyzed, but rates on arylamides are exceedingly low.. It catalyses the reaction Release of an N-terminal amino acid, preferentially leucine, but not glutamic or aspartic acids.. Its function is as follows. Presumably involved in the processing and regular turnover of intracellular proteins. Catalyzes the removal of unsubstituted N-terminal amino acids from various peptides. The polypeptide is Probable cytosol aminopeptidase (Burkholderia cenocepacia (strain ATCC BAA-245 / DSM 16553 / LMG 16656 / NCTC 13227 / J2315 / CF5610) (Burkholderia cepacia (strain J2315))).